Here is a 233-residue protein sequence, read N- to C-terminus: MAKISKRINKIHEGVDRNKLYDLSAAIGLVKERAVAKFDETVEIAMNLGVDPRHADQMVRGVVNLPNGTGRTVRVAVFARGDKAEEAKKAGADIVGAEELFEIVNGGKIEFDRCIATPDMMPLVGRLGKVLGPRGMMPNPKVGTVTTDVAAAVAASKGGAVEFRVEKAGIIHAGIGKVSFDNAKLEENIKAFADAVIKAKPSAAKGEYVKRVSISSTMGVGVKVDPSTVKVVD.

This sequence belongs to the universal ribosomal protein uL1 family. Part of the 50S ribosomal subunit.

Binds directly to 23S rRNA. The L1 stalk is quite mobile in the ribosome, and is involved in E site tRNA release. Its function is as follows. Protein L1 is also a translational repressor protein, it controls the translation of the L11 operon by binding to its mRNA. In Brucella melitensis biotype 1 (strain ATCC 23456 / CCUG 17765 / NCTC 10094 / 16M), this protein is Large ribosomal subunit protein uL1.